Reading from the N-terminus, the 341-residue chain is Major histocompatibility complex class I-related protein 1 (341 aa).

The N-terminal stretch at M1 to S22 is a signal peptide. The interval R23–S109 is alpha-1. Residues R23–T201 form an antigen-binding cleft region. At R23–M302 the chain is on the extracellular side. Y29 and R31 together coordinate 8-(9H-purin-6-yl)-2-oxa-8-azabicyclo[3.3.1]nona-3,6-diene-4,6-dicarbaldehyde. 5-(2-oxoethylideneamino)-6-(D-ribitylamino)uracil-binding residues include R31, S46, and K65. The 5-(2-oxopropylideneamino)-6-(D-ribitylamino)uracil site is built by R31, S46, and K65. 7-hydroxy-6-methyl-8-(1-D-ribityl)lumazine-binding residues include R31, S46, and K65. Positions 65 and 80 each coordinate 8-(9H-purin-6-yl)-2-oxa-8-azabicyclo[3.3.1]nona-3,6-diene-4,6-dicarbaldehyde. Position 65 (K65) interacts with 2-amino-4-oxopteridine-6-carbaldehyde. K65 lines the pyridoxal pocket. N107 carries an N-linked (GlcNAc...) asparagine glycan. Residues G110–T201 are alpha-2. R116 provides a ligand contact to 8-(9H-purin-6-yl)-2-oxa-8-azabicyclo[3.3.1]nona-3,6-diene-4,6-dicarbaldehyde. Positions 116, 174, and 175 each coordinate 5-(2-oxoethylideneamino)-6-(D-ribitylamino)uracil. R116, Y174, and Q175 together coordinate 5-(2-oxopropylideneamino)-6-(D-ribitylamino)uracil. The 7-hydroxy-6-methyl-8-(1-D-ribityl)lumazine site is built by R116, Y174, and Q175. Intrachain disulfides connect C120–C183 and C222–C278. Residues E202–Q293 form an alpha-3 region. The Ig-like C1-type domain maps to P203–P299. Residues E294–M302 are connecting peptide. Residues K303 to W323 traverse the membrane as a helical segment. The Cytoplasmic segment spans residues R324–R341.

The protein belongs to the MHC class I family. In terms of assembly, heterotrimer that consists of MR1, B2M and metabolite antigen. Major classes of metabolite ligands presented by MR1 include riboflavin-related antigens, pyrimidines and ribityl lumazines, nucleobase adducts and folate derivatives. Forms reversible covalent Schiff base complexes with microbial pyrimidine-based metabolite, which serves as a molecular switch triggering complete folding, stable association with B2M and translocation of the ternary complex from endoplasmic reticulum to the plasma membrane. Alternatively, forms non-Schiff base complexes with ribityl lumazines. On antigen-presenting cells, the ternary complex interacts with TCR on MR1-restricted T cells. Interacts with TAPBP and TAPBPL chaperones in the endoplasmic reticulum. TAPBP associated or not with MHC class I peptide loading complex binds ligand-free MR1 or MR1-B2M complex, providing for stable MR1 pools ready for metabolite antigen processing. TAPBPL interacts with MR1 in a ligand-independent way; this interaction may stabilize MR1 pool and facilitate ligand loading and dissociation. Structurally, MR1-B2M heterodimer adopts a topology similar to classical MHC class I molecules, with alpha-1 and alpha-2 domains of MR1 forming the antigen-binding cleft composed of two alpha-helices resting on a floor of 7-stranded anti-parallel beta-pleated sheet. MR1-B2M heterodimer (via alpha-helices) interacts with TCR (via CDR domains). N-glycosylated.

Its subcellular location is the cell membrane. It localises to the endoplasmic reticulum membrane. It is found in the golgi apparatus membrane. The protein resides in the early endosome membrane. The protein localises to the late endosome membrane. In terms of biological role, antigen-presenting molecule specialized in displaying microbial pyrimidine-based metabolites to alpha-beta T cell receptors (TCR) on innate-type mucosal-associated invariant T (MAIT) cells. In complex with B2M preferentially presents riboflavin-derived metabolites to semi-invariant TCRs on MAIT cells, guiding immune surveillance of the microbial metabolome at mucosal epithelial barriers. Signature pyrimidine-based microbial antigens are generated via non-enzymatic condensation of metabolite intermediates of the riboflavin pathway with by-products arising from other metabolic pathways such as glycolysis. Typical potent antigenic metabolites are 5-(2-oxoethylideneamino)-6-D-ribitylaminouracil (5-OE-RU) and 5-(2-oxopropylideneamino)-6-D-ribitylaminouracil (5-OP-RU), products of condensation of 5-amino-6-D-ribityaminouracil (5-A-RU) with glyoxal or methylglyoxal by-products, respectively. May present microbial antigens to various MAIT cell subsets, providing for unique recognition of diverse microbes, including pathogens that do not synthesize riboflavin. Upon antigen recognition, elicits rapid innate-type MAIT cell activation to eliminate pathogenic microbes by directly killing infected cells. During T cell development, drives thymic selection and post-thymic terminal differentiation of MAIT cells in a process dependent on commensal microflora. Acts as an immune sensor of cancer cell metabolome. May present a tumor-specific or -associated metabolite essential for cancer cell survival to a pan-cancer TCR on a non-MAIT CD8-positive T cell clone, triggering T cell-mediated killing of a wide range of cancer cell types. May present tumor-enriched pyridoxal and pyridoxal 5'-phosphate antigens, enabling preferential recognition of cancer cells. Presents nucleobase carbonyl adducts generated during oxidative stress. Captures M3Ade, a nucleobase adduct composed of one adenine modified by a malondialdehyde trimer, for recognition by MR1-restricted T cell clones expressing a polyclonal TCR repertoire. The chain is Major histocompatibility complex class I-related protein 1 from Pan troglodytes (Chimpanzee).